The chain runs to 57 residues: UPF0434 protein Shal_2504 (57 aa).

Belongs to the UPF0434 family.

This chain is UPF0434 protein Shal_2504, found in Shewanella halifaxensis (strain HAW-EB4).